The sequence spans 117 residues: Large ribosomal subunit protein bL19 (117 aa).

This sequence belongs to the bacterial ribosomal protein bL19 family.

In terms of biological role, this protein is located at the 30S-50S ribosomal subunit interface and may play a role in the structure and function of the aminoacyl-tRNA binding site. This is Large ribosomal subunit protein bL19 from Rhodopirellula baltica (strain DSM 10527 / NCIMB 13988 / SH1).